A 1093-amino-acid chain; its full sequence is Regulatory protein SWI4 (1093 aa).

The HTH APSES-type domain occupies 37-147 (IEIATYSETD…FQFDPNNPPP (111 aa)). Positions 71–92 (ITQVFKIAQFSKTKRTKILEKE) form a DNA-binding region, H-T-H motif. The tract at residues 138-210 (FQFDPNNPPP…NQPNPSPLQN (73 aa)) is disordered. Positions 152 to 172 (NSILRKTSPGTKITSPSSYNK) are enriched in polar residues. Residues 179–201 (SSSSTSATTTAANKKGKKNASIN) are compositionally biased toward low complexity. Residue Ser-255 is modified to Phosphoserine. A compositionally biased stretch (low complexity) spans 448–457 (NSMNMSSRSM). Positions 448–468 (NSMNMSSRSMTPFSAGNTSSQ) are disordered. Over residues 458-468 (TPFSAGNTSSQ) the composition is skewed to polar residues. ANK repeat units lie at residues 520–549 (QGHT…NALQ) and 641–670 (IGNT…STDI). Ser-806 carries the post-translational modification Phosphoserine. 2 disordered regions span residues 813–855 (RSQS…SSLL) and 973–1017 (QDEE…DAKF). Positions 818-837 (SDEKEKAKDNENQVEKKKDP) are enriched in basic and acidic residues. Over residues 846–855 (PSLESPSSLL) the composition is skewed to low complexity. The segment covering 1000–1010 (KSTSETSSPKN) has biased composition (polar residues).

As to quaternary structure, component of the transcription complex SCB-binding factor (SBF) composed of SWI6 and SWI4. Interacts with MSA2.

Functionally, part of a complex involved in cell-cycle-dependent transcription. SWI4 and SWI6 are required for formation of the cell-cycle box factor-DNA complex. The repeated element in the upstream region of HO (5'-CACGAAAA-3') is called the cell cycle box (CCB). The chain is Regulatory protein SWI4 (SWI4) from Saccharomyces cerevisiae (strain ATCC 204508 / S288c) (Baker's yeast).